The following is a 964-amino-acid chain: Syndetin (964 aa).

At Met1 the chain carries N-acetylmethionine. A disordered region spans residues 1-25 (MQKIKSLMTRQGLKSPPESLNDLGA). Ser15 is subject to Phosphoserine. 2 coiled-coil regions span residues 81–107 (LNLQELEEYRDKLKQQQSAVSKKVADL) and 216–244 (YSCISELNSKLQDTLEQIEEQLDVALSKI). A phosphoserine mark is found at Ser494, Ser498, Ser559, and Ser561. Residues 532–563 (DEETEDVLASNGYESDEQEKSAYQDYDSDSDV) form a disordered region. Residue Lys963 forms a Glycyl lysine isopeptide (Lys-Gly) (interchain with G-Cter in SUMO1); alternate linkage. Residue Lys963 forms a Glycyl lysine isopeptide (Lys-Gly) (interchain with G-Cter in SUMO2); alternate linkage.

This sequence belongs to the syndetin family. In terms of assembly, component of the endosome-associated retrograde protein (EARP) complex, composed of VPS51, VPS52, VPS53 and VPS50/Syndetin. The EARP complex interacts with EIPR1. Interacts with VPS51 and VPS53 in an EIPR1-independent manner.

It localises to the recycling endosome. The protein localises to the membrane. Functionally, acts as a component of the EARP complex that is involved in endocytic recycling. The EARP complex associates with Rab4-positive endosomes and promotes recycling of internalized transferrin receptor (TFRC) to the plasma membrane. Within the EARP complex, required to tether the complex to recycling endosomes. Not involved in retrograde transport from early and late endosomes to the trans-Golgi network (TGN). This chain is Syndetin, found in Mus musculus (Mouse).